The chain runs to 420 residues: Serine hydroxymethyltransferase (420 aa).

Residues Leu123 and 127 to 129 each bind (6S)-5,6,7,8-tetrahydrofolate; that span reads GHL. Lys232 bears the N6-(pyridoxal phosphate)lysine mark. 357–359 contributes to the (6S)-5,6,7,8-tetrahydrofolate binding site; that stretch reads SPF.

Belongs to the SHMT family. In terms of assembly, homodimer. Requires pyridoxal 5'-phosphate as cofactor.

It is found in the cytoplasm. The catalysed reaction is (6R)-5,10-methylene-5,6,7,8-tetrahydrofolate + glycine + H2O = (6S)-5,6,7,8-tetrahydrofolate + L-serine. The protein operates within one-carbon metabolism; tetrahydrofolate interconversion. It participates in amino-acid biosynthesis; glycine biosynthesis; glycine from L-serine: step 1/1. Functionally, catalyzes the reversible interconversion of serine and glycine with tetrahydrofolate (THF) serving as the one-carbon carrier. This reaction serves as the major source of one-carbon groups required for the biosynthesis of purines, thymidylate, methionine, and other important biomolecules. Also exhibits THF-independent aldolase activity toward beta-hydroxyamino acids, producing glycine and aldehydes, via a retro-aldol mechanism. This is Serine hydroxymethyltransferase from Streptococcus pyogenes serotype M12 (strain MGAS2096).